The sequence spans 217 residues: Ribosomal RNA small subunit methyltransferase G (217 aa).

Residues glycine 79, leucine 84, 130–131, and arginine 145 each bind S-adenosyl-L-methionine; that span reads IE.

This sequence belongs to the methyltransferase superfamily. RNA methyltransferase RsmG family.

The protein resides in the cytoplasm. It carries out the reaction guanosine(527) in 16S rRNA + S-adenosyl-L-methionine = N(7)-methylguanosine(527) in 16S rRNA + S-adenosyl-L-homocysteine. Functionally, specifically methylates the N7 position of guanine in position 527 of 16S rRNA. The protein is Ribosomal RNA small subunit methyltransferase G of Hahella chejuensis (strain KCTC 2396).